A 310-amino-acid chain; its full sequence is Porphobilinogen deaminase (310 aa).

Cys-243 is modified (S-(dipyrrolylmethanemethyl)cysteine).

It belongs to the HMBS family. In terms of assembly, monomer. Requires dipyrromethane as cofactor.

The catalysed reaction is 4 porphobilinogen + H2O = hydroxymethylbilane + 4 NH4(+). Its pathway is porphyrin-containing compound metabolism; protoporphyrin-IX biosynthesis; coproporphyrinogen-III from 5-aminolevulinate: step 2/4. Its function is as follows. Tetrapolymerization of the monopyrrole PBG into the hydroxymethylbilane pre-uroporphyrinogen in several discrete steps. The protein is Porphobilinogen deaminase of Mannheimia succiniciproducens (strain KCTC 0769BP / MBEL55E).